The chain runs to 238 residues: Ribosomal RNA small subunit methyltransferase G (238 aa).

S-adenosyl-L-methionine contacts are provided by residues glycine 77, phenylalanine 82, 128–129 (AE), and arginine 147.

The protein belongs to the methyltransferase superfamily. RNA methyltransferase RsmG family.

Its subcellular location is the cytoplasm. Specifically methylates the N7 position of guanine in position 535 of 16S rRNA. The sequence is that of Ribosomal RNA small subunit methyltransferase G from Brevibacillus brevis (strain 47 / JCM 6285 / NBRC 100599).